The chain runs to 526 residues: Cholesterol side-chain cleavage enzyme, mitochondrial (526 aa).

The transit peptide at 1–36 (MLAKGLCLRSVLVKSCQPFLSPVWQGPGLATGNGAG) directs the protein to the mitochondrion. Residue cysteine 459 coordinates heme.

The protein belongs to the cytochrome P450 family. In terms of assembly, interacts with FDX1/adrenodoxin. It depends on heme as a cofactor. Expressed in the kidney where it localizes to the distal convoluted tubule and the thick ascending limb of the loop of Henle (at protein level). In the ovary, highly expressed in interstitial cells (at protein level). Also expressed in adrenal gland and testis.

The protein localises to the mitochondrion inner membrane. The enzyme catalyses 6 reduced [adrenodoxin] + cholesterol + 3 O2 + 6 H(+) = 4-methylpentanal + pregnenolone + 6 oxidized [adrenodoxin] + 4 H2O. It carries out the reaction 2 reduced [adrenodoxin] + cholesterol + O2 + 2 H(+) = (22R)-hydroxycholesterol + 2 oxidized [adrenodoxin] + H2O. It catalyses the reaction (22R)-hydroxycholesterol + 2 reduced [adrenodoxin] + O2 + 2 H(+) = (20R,22R)-20,22-dihydroxycholesterol + 2 oxidized [adrenodoxin] + H2O. The catalysed reaction is (20R,22R)-20,22-dihydroxycholesterol + 2 reduced [adrenodoxin] + O2 + 2 H(+) = 4-methylpentanal + pregnenolone + 2 oxidized [adrenodoxin] + 2 H2O. It participates in lipid metabolism; C21-steroid hormone metabolism. The protein operates within steroid metabolism; cholesterol metabolism. Its function is as follows. A cytochrome P450 monooxygenase that catalyzes the side-chain hydroxylation and cleavage of cholesterol to pregnenolone, the precursor of most steroid hormones. Catalyzes three sequential oxidation reactions of cholesterol, namely the hydroxylation at C22 followed with the hydroxylation at C20 to yield 20R,22R-hydroxycholesterol that is further cleaved between C20 and C22 to yield the C21-steroid pregnenolone and 4-methylpentanal. Mechanistically, uses molecular oxygen inserting one oxygen atom into a substrate and reducing the second into a water molecule. Two electrons are provided by NADPH via a two-protein mitochondrial transfer system comprising flavoprotein FDXR (adrenodoxin/ferredoxin reductase) and nonheme iron-sulfur protein FDX1 or FDX2 (adrenodoxin/ferredoxin). This chain is Cholesterol side-chain cleavage enzyme, mitochondrial, found in Rattus norvegicus (Rat).